Here is a 412-residue protein sequence, read N- to C-terminus: Imidazolonepropionase (412 aa).

Positions 76 and 78 each coordinate Fe(3+). Residues His76 and His78 each contribute to the Zn(2+) site. 4-imidazolone-5-propanoate contacts are provided by Arg85, Tyr148, and His181. Tyr148 is an N-formimidoyl-L-glutamate binding site. His242 is a binding site for Fe(3+). His242 is a binding site for Zn(2+). Glu245 is a binding site for 4-imidazolone-5-propanoate. Asp317 serves as a coordination point for Fe(3+). Zn(2+) is bound at residue Asp317. The N-formimidoyl-L-glutamate site is built by Asn319 and Gly321. Ser322 provides a ligand contact to 4-imidazolone-5-propanoate.

Belongs to the metallo-dependent hydrolases superfamily. HutI family. The cofactor is Zn(2+). It depends on Fe(3+) as a cofactor.

The protein resides in the cytoplasm. It catalyses the reaction 4-imidazolone-5-propanoate + H2O = N-formimidoyl-L-glutamate. It functions in the pathway amino-acid degradation; L-histidine degradation into L-glutamate; N-formimidoyl-L-glutamate from L-histidine: step 3/3. Catalyzes the hydrolytic cleavage of the carbon-nitrogen bond in imidazolone-5-propanoate to yield N-formimidoyl-L-glutamate. It is the third step in the universal histidine degradation pathway. The sequence is that of Imidazolonepropionase from Staphylococcus saprophyticus subsp. saprophyticus (strain ATCC 15305 / DSM 20229 / NCIMB 8711 / NCTC 7292 / S-41).